The following is a 1220-amino-acid chain: Myosin-2 (1220 aa).

A compositionally biased stretch (polar residues) spans 1–12; the sequence is MMLSASPNTLAK. Disordered regions lie at residues 1–54 and 68–95; these read MMLS…ARRS and QNGS…RKEK. Residues 20–33 show a composition bias toward basic and acidic residues; it reads ESLRQKDECDRPKD. Residues 40-54 are compositionally biased toward low complexity; that stretch reads SRPNSRARLPSARRS. Residues 82–95 are compositionally biased toward basic and acidic residues; the sequence is ESERKEEGVKRKEK. The 50-residue stretch at 160–209 folds into the Myosin N-terminal SH3-like domain; that stretch reads KKKLRVWCRVSNGQWQLGKIQSTSADTSLVMLSTANVVKVSTEELFPANP. In terms of domain architecture, Myosin motor spans 213–879; sequence EGVEDLIQLS…QIGIFEDRRK (667 aa). ATP is bound by residues 304–311 and 353–361; these read GESGAGKT and NANSSRFGK. Actin-binding stretches follow at residues 638–672 and 759–781; these read LIEK…KQHL and LFKL…KPNS. 3 consecutive IQ domains span residues 881–910, 904–933, and 942–971; these read VLQG…VTLV, MRKV…FHAD, and ELSA…QKEL. 2 disordered regions span residues 968–1007 and 1075–1118; these read QKEL…MSDL and SITG…NGNT. Polar residues-rich tracts occupy residues 997–1006 and 1098–1118; these read PQVQPTSMSD and TMST…NGNT. Residues 1003–1071 adopt a coiled-coil conformation; that stretch reads SMSDLQKRIL…MSLAAARKSL (69 aa).

The protein belongs to the TRAFAC class myosin-kinesin ATPase superfamily. Myosin family. Plant myosin class VIII subfamily. As to quaternary structure, homodimer. Expressed in flowers, leaves and roots.

The protein resides in the cell junction. It localises to the plasmodesma. Its subcellular location is the endosome. In terms of biological role, myosin heavy chain that is required for the cell cycle-regulated transport of various organelles and proteins for their segregation. Functions by binding with its tail domain to receptor proteins on organelles and exerting force with its N-terminal motor domain against actin filaments, thereby transporting its cargo along polarized actin cables. Involved in endocytosis via its action in endosomal trafficking. The polypeptide is Myosin-2 (VIII-2) (Arabidopsis thaliana (Mouse-ear cress)).